The primary structure comprises 609 residues: Threonine--tRNA ligase (609 aa).

Residues 1–143 (MRVLYIHAER…SFKPEGAKVE (143 aa)) are editing domain. Catalytic regions lie at residues 195–491 (PRYL…PRLP) and 196–491 (RYLD…PRLP). The Zn(2+) site is built by C288, H339, and H460.

It belongs to the class-II aminoacyl-tRNA synthetase family. As to quaternary structure, homodimer. Zn(2+) serves as cofactor.

The protein localises to the cytoplasm. It catalyses the reaction tRNA(Thr) + L-threonine + ATP = L-threonyl-tRNA(Thr) + AMP + diphosphate + H(+). Functionally, catalyzes the attachment of threonine to tRNA(Thr) in a two-step reaction: L-threonine is first activated by ATP to form Thr-AMP and then transferred to the acceptor end of tRNA(Thr). Also edits incorrectly charged L-seryl-tRNA(Thr). This chain is Threonine--tRNA ligase, found in Pyrobaculum islandicum (strain DSM 4184 / JCM 9189 / GEO3).